Here is a 402-residue protein sequence, read N- to C-terminus: S-adenosylmethionine synthase (402 aa).

His16 contacts ATP. Mg(2+) is bound at residue Asp18. Glu44 contacts K(+). Residues Glu57 and Gln109 each contribute to the L-methionine site. Residues 109-119 are flexible loop; the sequence is QSAHIAQGVDA. Residues 174-176, Asp252, 258-259, Ala275, and Lys279 contribute to the ATP site; these read DTK and RK. Asp252 contacts L-methionine. Lys283 is a binding site for L-methionine.

The protein belongs to the AdoMet synthase family. In terms of assembly, homotetramer; dimer of dimers. Mg(2+) is required as a cofactor. K(+) serves as cofactor.

It is found in the cytoplasm. The catalysed reaction is L-methionine + ATP + H2O = S-adenosyl-L-methionine + phosphate + diphosphate. Its pathway is amino-acid biosynthesis; S-adenosyl-L-methionine biosynthesis; S-adenosyl-L-methionine from L-methionine: step 1/1. In terms of biological role, catalyzes the formation of S-adenosylmethionine (AdoMet) from methionine and ATP. The overall synthetic reaction is composed of two sequential steps, AdoMet formation and the subsequent tripolyphosphate hydrolysis which occurs prior to release of AdoMet from the enzyme. This Rhizorhabdus wittichii (strain DSM 6014 / CCUG 31198 / JCM 15750 / NBRC 105917 / EY 4224 / RW1) (Sphingomonas wittichii) protein is S-adenosylmethionine synthase.